The sequence spans 497 residues: Glutamate--tRNA ligase (497 aa).

The short motif at 13 to 23 (PSPTGTPHVGM) is the 'HIGH' region element. Positions 257-261 (KLSKR) match the 'KMSKS' region motif. Lysine 260 provides a ligand contact to ATP.

Belongs to the class-I aminoacyl-tRNA synthetase family. Glutamate--tRNA ligase type 1 subfamily. In terms of assembly, monomer.

Its subcellular location is the cytoplasm. The enzyme catalyses tRNA(Glu) + L-glutamate + ATP = L-glutamyl-tRNA(Glu) + AMP + diphosphate. Its function is as follows. Catalyzes the attachment of glutamate to tRNA(Glu) in a two-step reaction: glutamate is first activated by ATP to form Glu-AMP and then transferred to the acceptor end of tRNA(Glu). In Corynebacterium diphtheriae (strain ATCC 700971 / NCTC 13129 / Biotype gravis), this protein is Glutamate--tRNA ligase.